We begin with the raw amino-acid sequence, 389 residues long: S-adenosylmethionine synthase (389 aa).

Position 15 (His-15) interacts with ATP. Asp-17 contacts Mg(2+). Glu-43 contacts K(+). Residues Glu-56 and Gln-99 each coordinate L-methionine. The segment at 99–109 is flexible loop; sequence QSPDIAQGVNE. ATP-binding positions include 166–168, 234–235, Asp-243, 249–250, Ala-266, and Lys-270; these read DAK, RF, and RK. Asp-243 contacts L-methionine. L-methionine is bound at residue Lys-274.

This sequence belongs to the AdoMet synthase family. In terms of assembly, homotetramer; dimer of dimers. The cofactor is Mg(2+). K(+) serves as cofactor.

The protein localises to the cytoplasm. The catalysed reaction is L-methionine + ATP + H2O = S-adenosyl-L-methionine + phosphate + diphosphate. Its pathway is amino-acid biosynthesis; S-adenosyl-L-methionine biosynthesis; S-adenosyl-L-methionine from L-methionine: step 1/1. Its function is as follows. Catalyzes the formation of S-adenosylmethionine (AdoMet) from methionine and ATP. The overall synthetic reaction is composed of two sequential steps, AdoMet formation and the subsequent tripolyphosphate hydrolysis which occurs prior to release of AdoMet from the enzyme. This Neisseria meningitidis serogroup C / serotype 2a (strain ATCC 700532 / DSM 15464 / FAM18) protein is S-adenosylmethionine synthase.